The primary structure comprises 105 residues: ATP-dependent Clp protease adapter protein ClpS (105 aa).

The protein belongs to the ClpS family. In terms of assembly, binds to the N-terminal domain of the chaperone ClpA.

In terms of biological role, involved in the modulation of the specificity of the ClpAP-mediated ATP-dependent protein degradation. In Aeromonas hydrophila subsp. hydrophila (strain ATCC 7966 / DSM 30187 / BCRC 13018 / CCUG 14551 / JCM 1027 / KCTC 2358 / NCIMB 9240 / NCTC 8049), this protein is ATP-dependent Clp protease adapter protein ClpS.